The sequence spans 301 residues: Transcription factor bHLH103 (301 aa).

The KRAB domain occupies 29 to 106 (PRSAEIVVDF…LEGLFDSSEQ (78 aa)). 2 disordered regions span residues 161–184 (EKSG…ETPS) and 239–272 (TSPH…PRQD). The region spanning 180 to 229 (LETPSHFPSFKVRKEKLGDRITALQQLVSPFGKTDTASVLHDAIDYIKFL) is the bHLH domain. Residues 239-269 (TSPHLNSIGSGEQKQWSDKSSNNTHNQNCSP) show a composition bias toward polar residues.

Homodimer. In terms of tissue distribution, mature root endodermis.

It localises to the nucleus. This Arabidopsis thaliana (Mouse-ear cress) protein is Transcription factor bHLH103 (BHLH103).